Consider the following 557-residue polypeptide: 2-succinyl-5-enolpyruvyl-6-hydroxy-3-cyclohexene-1-carboxylate synthase (557 aa).

Belongs to the TPP enzyme family. MenD subfamily. Homodimer. Mg(2+) is required as a cofactor. The cofactor is Mn(2+). Thiamine diphosphate serves as cofactor.

It carries out the reaction isochorismate + 2-oxoglutarate + H(+) = 5-enolpyruvoyl-6-hydroxy-2-succinyl-cyclohex-3-ene-1-carboxylate + CO2. The protein operates within quinol/quinone metabolism; 1,4-dihydroxy-2-naphthoate biosynthesis; 1,4-dihydroxy-2-naphthoate from chorismate: step 2/7. It functions in the pathway quinol/quinone metabolism; menaquinone biosynthesis. Functionally, catalyzes the thiamine diphosphate-dependent decarboxylation of 2-oxoglutarate and the subsequent addition of the resulting succinic semialdehyde-thiamine pyrophosphate anion to isochorismate to yield 2-succinyl-5-enolpyruvyl-6-hydroxy-3-cyclohexene-1-carboxylate (SEPHCHC). The protein is 2-succinyl-5-enolpyruvyl-6-hydroxy-3-cyclohexene-1-carboxylate synthase of Yersinia enterocolitica serotype O:8 / biotype 1B (strain NCTC 13174 / 8081).